Reading from the N-terminus, the 335-residue chain is 3-ketodihydrosphingosine reductase TSC10 (335 aa).

Residues G42, S44, S45, and G46 each contribute to the NADPH site. The GXSXG signature appears at 42-46 (GGSSG). Residue L47 coordinates NADP(+). The NADPH site is built by R67, D68, K71, D95, and L96. D95 serves as a coordination point for NADP(+). NADP(+) is bound by residues Y190, K194, and I223. Residue Y190 is the Proton acceptor of the active site. The active-site Lowers pKa of active site Tyr is K194. A helical membrane pass occupies residues 288–308 (TNNFLLDTLWLIVSSVGVPIW).

It belongs to the short-chain dehydrogenases/reductases (SDR) family.

Its subcellular location is the endoplasmic reticulum membrane. It carries out the reaction sphinganine + NADP(+) = 3-oxosphinganine + NADPH + H(+). Its pathway is lipid metabolism; sphingolipid metabolism. Functionally, catalyzes the reduction of 3'-oxosphinganine (3-ketodihydrosphingosine/KDS) to sphinganine (dihydrosphingosine/DHS), the second step of de novo sphingolipid biosynthesis. This Cryptococcus neoformans var. neoformans serotype D (strain B-3501A) (Filobasidiella neoformans) protein is 3-ketodihydrosphingosine reductase TSC10 (TSC10).